The primary structure comprises 476 residues: MSVNEENGAGKDASRANAQWGGRFAGGPSAIMQDINASIGFDHVLWRQDIAGSLAHAAMLARTGIISADDEAAIRRGLTEIGAEIEAGRFDFSTALEDIHMNIEARLSDRIGEAGKRLHTARSRNDQVATDFRLWVRDAIDGLDAQAASLMRALCRRAEQHAADPMPGFTHLQTAQPVTFGHHLMAYVEMLGRDRGRLADARRRLNECPLGSAALAGTSFPIDRRMTAAALGFDRPTANSLDAVSDRDFALEYLSALSIMAMHLSRLSEEIVIWCSAPFAFVRLSDAFTTGSSIMPQKRNPDAAELVRAKIGRVTGALVGLLTVMKGLPLAYAKDMQEDKEPVFAATDAAALSLAACDGMIRDLTANTDRMRAYAGSGFSTATDLADWLVRVLKLPFRTAHHVTGRLVGLAESRGVDLSDLSLADMQAEEAGITQDIFSVLTVESSIASRTSEGGTAPDNVRAQAARWLAVLENGA.

This sequence belongs to the lyase 1 family. Argininosuccinate lyase subfamily.

Its subcellular location is the cytoplasm. The catalysed reaction is 2-(N(omega)-L-arginino)succinate = fumarate + L-arginine. It functions in the pathway amino-acid biosynthesis; L-arginine biosynthesis; L-arginine from L-ornithine and carbamoyl phosphate: step 3/3. This chain is Argininosuccinate lyase, found in Gluconacetobacter diazotrophicus (strain ATCC 49037 / DSM 5601 / CCUG 37298 / CIP 103539 / LMG 7603 / PAl5).